We begin with the raw amino-acid sequence, 430 residues long: Cytochrome P450 monooxygenase FGSG_15680 (430 aa).

Residue cysteine 351 coordinates heme.

It belongs to the cytochrome P450 family. The cofactor is heme.

Its pathway is mycotoxin biosynthesis. Its function is as follows. Cytochrome P450 monooxygenase; part of the gene cluster that mediates the biosynthesis of gramillins A and B, bicyclic lipopeptides that induce cell death in maize leaves but not in wheat leaves. The nonribosomal peptide synthetase GRA1 incorporates respectively a glutamic adic (Glu), a leucine (Leu), a serine (Ser), a hydroxyglutamine (HOGln), a 2-amino decanoic acid, and 2 cysteins (CysB and CysA). The biosynthesis of 2-amino decanoic acid incorporated in gramillins could be initiated by a fatty acid synthase composed of the alpha and beta subunits FGSG_00036 and FGSG_11656. The cytochrome P450 monooxygenase FGSG_15680 could hydroxylate the fatty acid chain. Subsequent oxidation to the ketone by the oxidoreductase FGSG_00048 and transamination by aminotransferase FGSG_00049 could form 2-amino-decanoic acid. On the other hand, FGSG_15680 could also be responsible for the HO-modified glutamine at the gamma-position. Whether hydroxylation occurs on the fully assembled product or on the Gln residue prior to assembly into the gramillins requires further proof. The thioredoxin FGSG_00043 could also be required for the disulfide-bond formation between CysA and CysB. The specific involvement of the remaining proteins from the cluster is more difficult to discern, but could have broader regulatory (FGSG_00040 and FGSG_11657) or enzymatic functions (FGSG_00044 and FGSG_00045). The final C-domain of GRA1 does not possess the expected sequence of a termination CT domain, often implicated in macrocyclization and release of a cyclopeptidein fungal NRPs; and the thioesterase FGSG_00047 may act in concert with the terminal C-domain of GRA1 to catalyze the formation of the macrocyclic anhydride and release of the products. This chain is Cytochrome P450 monooxygenase FGSG_15680, found in Gibberella zeae (strain ATCC MYA-4620 / CBS 123657 / FGSC 9075 / NRRL 31084 / PH-1) (Wheat head blight fungus).